The sequence spans 244 residues: Carboxy-S-adenosyl-L-methionine synthase (244 aa).

S-adenosyl-L-methionine is bound by residues Tyr40, Gly65–Ser67, Asp90–Asn91, Asp119–Ile120, Asn134, and Arg201.

Belongs to the class I-like SAM-binding methyltransferase superfamily. Cx-SAM synthase family. As to quaternary structure, homodimer.

The enzyme catalyses prephenate + S-adenosyl-L-methionine = carboxy-S-adenosyl-L-methionine + 3-phenylpyruvate + H2O. Its function is as follows. Catalyzes the conversion of S-adenosyl-L-methionine (SAM) to carboxy-S-adenosyl-L-methionine (Cx-SAM). The protein is Carboxy-S-adenosyl-L-methionine synthase of Geobacter sp. (strain M21).